The following is a 211-amino-acid chain: ATP phosphoribosyltransferase (211 aa).

The protein belongs to the ATP phosphoribosyltransferase family. Short subfamily. Heteromultimer composed of HisG and HisZ subunits.

The protein resides in the cytoplasm. The enzyme catalyses 1-(5-phospho-beta-D-ribosyl)-ATP + diphosphate = 5-phospho-alpha-D-ribose 1-diphosphate + ATP. Its pathway is amino-acid biosynthesis; L-histidine biosynthesis; L-histidine from 5-phospho-alpha-D-ribose 1-diphosphate: step 1/9. Catalyzes the condensation of ATP and 5-phosphoribose 1-diphosphate to form N'-(5'-phosphoribosyl)-ATP (PR-ATP). Has a crucial role in the pathway because the rate of histidine biosynthesis seems to be controlled primarily by regulation of HisG enzymatic activity. This is ATP phosphoribosyltransferase from Pseudomonas syringae pv. syringae (strain B728a).